The sequence spans 432 residues: Queuine tRNA-ribosyltransferase accessory subunit 2 (432 aa).

The Zn(2+) site is built by Cys-329, Cys-331, Cys-334, and His-360. The segment at 390-432 (GQKSLPPYEPPKEEKLPMPAAQKAELMEPMEDLGEKQNKKQRA) is disordered. The segment covering 422–432 (LGEKQNKKQRA) has biased composition (basic and acidic residues).

The protein belongs to the queuine tRNA-ribosyltransferase family. QTRT2 subfamily. In terms of assembly, heterodimer of a catalytic subunit and an accessory subunit. It depends on Zn(2+) as a cofactor.

Its subcellular location is the cytoplasm. Non-catalytic subunit of the queuine tRNA-ribosyltransferase (TGT) that catalyzes the base-exchange of a guanine (G) residue with queuine (Q) at position 34 (anticodon wobble position) in tRNAs with GU(N) anticodons (tRNA-Asp, -Asn, -His and -Tyr), resulting in the hypermodified nucleoside queuosine (7-(((4,5-cis-dihydroxy-2-cyclopenten-1-yl)amino)methyl)-7-deazaguanosine). This Anopheles gambiae (African malaria mosquito) protein is Queuine tRNA-ribosyltransferase accessory subunit 2.